The primary structure comprises 591 residues: Aspartate--tRNA(Asp/Asn) ligase (591 aa).

L-aspartate is bound at residue Glu174. Residues 198–201 (QLFK) are aspartate. Residue Arg220 coordinates L-aspartate. ATP is bound by residues 220–222 (RDE) and Gln229. His450 contacts L-aspartate. ATP is bound at residue Glu483. Arg490 is an L-aspartate binding site. 535-538 (GLDR) lines the ATP pocket.

Belongs to the class-II aminoacyl-tRNA synthetase family. Type 1 subfamily. In terms of assembly, homodimer.

The protein resides in the cytoplasm. It catalyses the reaction tRNA(Asx) + L-aspartate + ATP = L-aspartyl-tRNA(Asx) + AMP + diphosphate. Functionally, aspartyl-tRNA synthetase with relaxed tRNA specificity since it is able to aspartylate not only its cognate tRNA(Asp) but also tRNA(Asn). Reaction proceeds in two steps: L-aspartate is first activated by ATP to form Asp-AMP and then transferred to the acceptor end of tRNA(Asp/Asn). This Pseudomonas syringae pv. tomato (strain ATCC BAA-871 / DC3000) protein is Aspartate--tRNA(Asp/Asn) ligase.